We begin with the raw amino-acid sequence, 216 residues long: Small ribosomal subunit protein uS3c (216 aa).

The KH type-2 domain maps to 43-115 (FENDWGTLYN…QTRIKVIQVN (73 aa)).

The protein belongs to the universal ribosomal protein uS3 family. As to quaternary structure, part of the 30S ribosomal subunit.

The protein resides in the plastid. It localises to the chloroplast. The sequence is that of Small ribosomal subunit protein uS3c (rps3) from Emiliania huxleyi (Coccolithophore).